The sequence spans 352 residues: Heavy metal-associated isoprenylated plant protein 36 (352 aa).

The HMA domain maps to 29 to 92; sequence YTTWVLRVSI…KIMKAGRHAE (64 aa). A metal cation is bound by residues Cys-40 and Cys-43. Disordered regions lie at residues 96 to 150, 162 to 211, and 229 to 252; these read TSME…GNFD, QLQP…GPPE, and PHLH…RHHP. The span at 97–107 shows a compositional bias: polar residues; it reads SMENNINNDCN. Residues 118-128 show a composition bias toward acidic residues; the sequence is ETSGDEDDDEN. Over residues 133-148 the composition is skewed to gly residues; that stretch reads NGGGDVGGGGGGGGGN. The segment covering 172–183 has biased composition (basic residues); sequence KKKKKKKKKKKS. The segment covering 192–203 has biased composition (gly residues); that stretch reads EGGGGGGGGGGP. Cys-349 is subject to Cysteine methyl ester. Residue Cys-349 is the site of S-farnesyl cysteine attachment. Positions 350-352 are cleaved as a propeptide — removed in mature form; the sequence is CVM.

This sequence belongs to the HIPP family.

Functionally, heavy-metal-binding protein. This is Heavy metal-associated isoprenylated plant protein 36 from Arabidopsis thaliana (Mouse-ear cress).